A 271-amino-acid chain; its full sequence is Putative glucose-6-phosphate 1-epimerase (271 aa).

2 residues coordinate substrate: R71 and R93. Residue H151 is part of the active site. Position 193 (D193) interacts with substrate. E249 is an active-site residue.

The protein belongs to the glucose-6-phosphate 1-epimerase family.

The enzyme catalyses alpha-D-glucose 6-phosphate = beta-D-glucose 6-phosphate. This is Putative glucose-6-phosphate 1-epimerase from Haemophilus influenzae (strain ATCC 51907 / DSM 11121 / KW20 / Rd).